The chain runs to 200 residues: NADH-quinone oxidoreductase subunit C (200 aa).

Belongs to the complex I 30 kDa subunit family. In terms of assembly, NDH-1 is composed of 14 different subunits. Subunits NuoB, C, D, E, F, and G constitute the peripheral sector of the complex.

The protein localises to the cell inner membrane. It carries out the reaction a quinone + NADH + 5 H(+)(in) = a quinol + NAD(+) + 4 H(+)(out). NDH-1 shuttles electrons from NADH, via FMN and iron-sulfur (Fe-S) centers, to quinones in the respiratory chain. The immediate electron acceptor for the enzyme in this species is believed to be ubiquinone. Couples the redox reaction to proton translocation (for every two electrons transferred, four hydrogen ions are translocated across the cytoplasmic membrane), and thus conserves the redox energy in a proton gradient. The chain is NADH-quinone oxidoreductase subunit C from Burkholderia ambifaria (strain MC40-6).